Here is a 166-residue protein sequence, read N- to C-terminus: tRNA-acetylating toxin (166 aa).

Residues 1 to 22 are disordered; that stretch reads MSGYSAPRRISDADDVTSFSSG. The 162-residue stretch at 1–162 folds into the N-acetyltransferase domain; sequence MSGYSAPRRI…LMLLMKDARA (162 aa). Y138 is a catalytic residue.

It belongs to the acetyltransferase family. GNAT subfamily. As to quaternary structure, homodimer, forms a complex with cognate antitoxin TacA.

It carries out the reaction glycyl-tRNA(Gly) + acetyl-CoA = N-acetylglycyl-tRNA(Gly) + CoA + H(+). In terms of biological role, toxic component of a type II toxin-antitoxin (TA) system. Overexpression of this gene alone in M.smegmatis inhibits growth, while overexpression of the tacA-tacT operon does not. Acetylates glycyl-tRNA(Gly) but not other tRNAs, blocks in vitro translation in the presence, but not absence, of acetyl-coenzyme A. Peptidyl-tRNA hydrolase (pth) counteracts the product of this enzyme in vitro. Neutralized by cognate antitoxin TacA. Does not seem to be active in laboratory growth conditions. Its function is as follows. TacA-TacT both represses and derepresses expression of its own operon. This Mycobacterium tuberculosis (strain ATCC 25618 / H37Rv) protein is tRNA-acetylating toxin.